Here is a 309-residue protein sequence, read N- to C-terminus: Ribosomal RNA small subunit methyltransferase H (309 aa).

S-adenosyl-L-methionine-binding positions include 30 to 32, Asp-50, Phe-74, Asp-96, and Gln-103; that span reads GGH.

Belongs to the methyltransferase superfamily. RsmH family.

Its subcellular location is the cytoplasm. The catalysed reaction is cytidine(1402) in 16S rRNA + S-adenosyl-L-methionine = N(4)-methylcytidine(1402) in 16S rRNA + S-adenosyl-L-homocysteine + H(+). Specifically methylates the N4 position of cytidine in position 1402 (C1402) of 16S rRNA. In Wigglesworthia glossinidia brevipalpis, this protein is Ribosomal RNA small subunit methyltransferase H.